Here is a 92-residue protein sequence, read N- to C-terminus: Non-specific lipid-transfer protein B (92 aa).

4 disulfide bridges follow: C3–C51, C13–C28, C29–C74, and C49–C88.

The protein belongs to the plant LTP family.

Functionally, plant non-specific lipid-transfer proteins transfer phospholipids as well as galactolipids across membranes. May play a role in wax or cutin deposition in the cell walls of expanding epidermal cells and certain secretory tissues. This chain is Non-specific lipid-transfer protein B, found in Ricinus communis (Castor bean).